The following is a 111-amino-acid chain: Universal stress protein B (111 aa).

Helical transmembrane passes span 1–21 (MIST…NMAR) and 90–110 (FILT…LLIW).

It belongs to the universal stress protein B family.

The protein localises to the cell inner membrane. This is Universal stress protein B from Enterobacter sp. (strain 638).